Consider the following 141-residue polypeptide: Hemoglobin subunit alpha-A (141 aa).

The Globin domain maps to 1-141; sequence VLSAADKTNV…VGAVLTAKYR (141 aa). An O2-binding site is contributed by His58. Residue His87 participates in heme b binding.

Belongs to the globin family. In terms of assembly, heterotetramer of two alpha chains and two beta chains. In terms of tissue distribution, red blood cells.

Involved in oxygen transport from the lung to the various peripheral tissues. This Cygnus olor (Mute swan) protein is Hemoglobin subunit alpha-A (HBAA).